The chain runs to 185 residues: Elongation factor P (185 aa).

The protein belongs to the elongation factor P family.

Its subcellular location is the cytoplasm. It participates in protein biosynthesis; polypeptide chain elongation. Its function is as follows. Involved in peptide bond synthesis. Stimulates efficient translation and peptide-bond synthesis on native or reconstituted 70S ribosomes in vitro. Probably functions indirectly by altering the affinity of the ribosome for aminoacyl-tRNA, thus increasing their reactivity as acceptors for peptidyl transferase. The protein is Elongation factor P of Nitratidesulfovibrio vulgaris (strain DP4) (Desulfovibrio vulgaris).